The chain runs to 372 residues: O-methyltransferase bfoE (372 aa).

Trp186 lines the S-adenosyl-L-methionine pocket. His285 functions as the Proton acceptor in the catalytic mechanism.

This sequence belongs to the class I-like SAM-binding methyltransferase superfamily. Cation-independent O-methyltransferase family.

It functions in the pathway secondary metabolite biosynthesis. Cytochrome P450 monooxygenase; part of the gene cluster that mediates the biosynthesis of bifonsecin B, a dimeric gamma-naphthopyrone. The first step in the biosynthesis of bifonsecin B is the production of gamma-naphthopyrone precursor YWA1 by the non-reducing polyketide synthase albA, via condensation of one acetyl-CoA starter unit with 6 malonyl-CoA units. YWA1 is then methylated by bfoE at position C-6 to yield foncesin which is further methylated at position C-8 by bfoD to produce fonsecin B. A key enzyme in the biosynthetic pathway is the cytochrome P450 monooxygenase bfoB which catalyzes the oxidative dimerization of fonsecin B to bifonsecin B. Bfob also catalyzes the oxidative dimerization of rubrofusarin B into nigerone. The stereoselectivity of bfoB is influenced by the two natural monomeric substrates; homodimerization of fonsecin B yields a stereochemically pure biaryl, M-foncerine B, while rubrofusarin B yields a mixture of enantiomers M- and P-nigerone. In Aspergillus brasiliensis (strain CBS 101740 / IMI 381727 / IBT 21946), this protein is O-methyltransferase bfoE.